Here is a 218-residue protein sequence, read N- to C-terminus: Large ribosomal subunit protein uL4 (218 aa).

Residues 46–100 are disordered; it reads ARQGTHSTKTRAEVRGGGRKPFRQKGTGRARQGSIRAPHFTGGGISHGPKPRDYA. A compositionally biased stretch (basic residues) spans 62 to 73; the sequence is GGRKPFRQKGTG.

This sequence belongs to the universal ribosomal protein uL4 family. As to quaternary structure, part of the 50S ribosomal subunit.

Functionally, one of the primary rRNA binding proteins, this protein initially binds near the 5'-end of the 23S rRNA. It is important during the early stages of 50S assembly. It makes multiple contacts with different domains of the 23S rRNA in the assembled 50S subunit and ribosome. Forms part of the polypeptide exit tunnel. The chain is Large ribosomal subunit protein uL4 from Corynebacterium efficiens (strain DSM 44549 / YS-314 / AJ 12310 / JCM 11189 / NBRC 100395).